A 448-amino-acid chain; its full sequence is UDP-N-acetylmuramoylalanine--D-glutamate ligase (448 aa).

112-118 (GSNAKST) is a binding site for ATP.

The protein belongs to the MurCDEF family.

The protein localises to the cytoplasm. It carries out the reaction UDP-N-acetyl-alpha-D-muramoyl-L-alanine + D-glutamate + ATP = UDP-N-acetyl-alpha-D-muramoyl-L-alanyl-D-glutamate + ADP + phosphate + H(+). It participates in cell wall biogenesis; peptidoglycan biosynthesis. Cell wall formation. Catalyzes the addition of glutamate to the nucleotide precursor UDP-N-acetylmuramoyl-L-alanine (UMA). The protein is UDP-N-acetylmuramoylalanine--D-glutamate ligase of Acinetobacter baumannii (strain ATCC 17978 / DSM 105126 / CIP 53.77 / LMG 1025 / NCDC KC755 / 5377).